Reading from the N-terminus, the 1585-residue chain is Histone acetyltransferase lsy-12 (1585 aa).

2 disordered regions span residues 1 to 37 and 279 to 491; these read MGKKRKPSPERSSDEDEVSTPSPKDRTARPTAAARRE and GPQH…DDPV. A compositionally biased stretch (basic and acidic residues) spans 23–37; that stretch reads PKDRTARPTAAARRE. Positions 279–296 are enriched in polar residues; that stretch reads GPQHENVTVSENVLSTES. The span at 302-312 shows a compositional bias: basic and acidic residues; it reads TETKRLHDSSR. Polar residues-rich tracts occupy residues 355 to 364 and 411 to 426; these read LLSNPHSTPV and SRLSALTIDTNRSNDL. Residues 431-440 are compositionally biased toward low complexity; the sequence is SAPSSSSAAS. The span at 453–469 shows a compositional bias: basic residues; the sequence is QQRRKGNQSAARSRKIK. Acidic residues predominate over residues 477-491; sequence QEDEPMELDSDDDPV. Residues 544–830 form the MYST-type HAT domain; that stretch reads EQARLPERIH…YDPECLDWVP (287 aa). The segment at 577 to 602 adopts a C2HC MYST-type zinc-finger fold; the sequence is LFICEFCFFYARSDEIMQNHAKKCML. Lys644 is modified (N6-acetyllysine; by autocatalysis). 685–689 is a binding site for acetyl-CoA; that stretch reads SCIMT. Glu720 functions as the Proton donor/acceptor in the catalytic mechanism. 2 residues coordinate acetyl-CoA: Ser724 and Lys815. Composition is skewed to basic and acidic residues over residues 844–855 and 947–956; these read SKEEIEQDEQRR and VLDKSNIREE. Disordered regions lie at residues 844-903, 927-1262, 1286-1373, and 1431-1507; these read SKEE…LKHE, EENK…IGKS, ESTA…ASNH, and HHQF…VHPQ. The segment covering 977 to 999 has biased composition (polar residues); the sequence is NKCNNTESEPNPSGRKTSATSSG. The segment covering 1011 to 1022 has biased composition (acidic residues); that stretch reads TEEEEEDDDPTD. Residues 1029 to 1046 show a composition bias toward basic and acidic residues; the sequence is DDEKPFETSVNKEKNEKS. Positions 1047–1060 are enriched in basic residues; that stretch reads RRGKKVSKKRRSVA. 2 stretches are compositionally biased toward basic and acidic residues: residues 1070–1081 and 1135–1151; these read VRDRDEPKKAEN and DIPKSDEDHQSTEAYDR. The span at 1164-1173 shows a compositional bias: low complexity; sequence PTPDSYHSSP. A compositionally biased stretch (polar residues) spans 1185 to 1194; that stretch reads LMQAQQNIYQ. Over residues 1196 to 1207 the composition is skewed to basic and acidic residues; that stretch reads NDCHFAENDSKP. Polar residues-rich tracts occupy residues 1298–1317 and 1324–1333; these read AGPSTSSHVTPQMSMINTTP and HPNSQQQATP. A compositionally biased stretch (low complexity) spans 1482 to 1493; it reads QHQQQQPQQPQQ.

The protein belongs to the MYST (SAS/MOZ) family.

The catalysed reaction is L-lysyl-[protein] + acetyl-CoA = N(6)-acetyl-L-lysyl-[protein] + CoA + H(+). In terms of biological role, probable histone acetyltransferase. Required to initiate and then maintain lateralized gene expression in the ASE sensory neurons. Involved in determining cell fate in the ASE neurons. The protein is Histone acetyltransferase lsy-12 of Caenorhabditis elegans.